A 167-amino-acid polypeptide reads, in one-letter code: Photosystem I assembly protein Ycf3 (167 aa).

TPR repeat units lie at residues 35-68 (AFAYYRDGMSAQAEGEYAEALQNYYEAMRLEVDA), 72-105 (SYILYNIGLIHTSNGEHAKALEYYYQAIERNPSL), and 120-153 (GEQAIEEGNSEAAEILFDQAASYWKQAIRLAPTS).

The protein belongs to the Ycf3 family.

It is found in the plastid. It localises to the chloroplast thylakoid membrane. Functionally, essential for the assembly of the photosystem I (PSI) complex. May act as a chaperone-like factor to guide the assembly of the PSI subunits. This Chlorokybus atmophyticus (Soil alga) protein is Photosystem I assembly protein Ycf3.